The chain runs to 237 residues: Probable septum site-determining protein MinC (237 aa).

Belongs to the MinC family. In terms of assembly, interacts with MinD and FtsZ.

Functionally, cell division inhibitor that blocks the formation of polar Z ring septums. Rapidly oscillates between the poles of the cell to destabilize FtsZ filaments that have formed before they mature into polar Z rings. Prevents FtsZ polymerization. This is Probable septum site-determining protein MinC from Neisseria gonorrhoeae.